The following is a 222-amino-acid chain: uncharacterized protein (222 aa).

The interval 142 to 222 is disordered; that stretch reads ARRGGCVHPP…LPDPPSAGHL (81 aa). Residues 160 to 169 show a composition bias toward low complexity; it reads QSRSISSRRA. Residues 182–196 show a composition bias toward basic residues; that stretch reads PRRRPHRHRTRPQTR.

Belongs to the Rv1128c/1148c/1588c/1702c/1945/3466 family.

This is an uncharacterized protein from Mycobacterium tuberculosis (strain ATCC 25618 / H37Rv).